We begin with the raw amino-acid sequence, 77 residues long: Cysteine-rich protein 1 (77 aa).

The LIM zinc-binding domain maps to 2–63; the sequence is PKCPKCDKEV…HPCYSAMFGP (62 aa). N6-acetyllysine occurs at positions 9 and 22. At Arg-68 the chain carries Omega-N-methylarginine.

In terms of biological role, seems to have a role in zinc absorption and may function as an intracellular zinc transport protein. This is Cysteine-rich protein 1 (Crip1) from Mus musculus (Mouse).